Reading from the N-terminus, the 382-residue chain is G-box-binding factor 3 (382 aa).

The span at 1–16 shows a compositional bias: basic and acidic residues; the sequence is MGNSSEEPKPPTKSDK. Disordered stretches follow at residues 1 to 26, 97 to 221, and 257 to 285; these read MGNS…DQTN, MGSL…GVKL, and EREL…AETE. The span at 111–130 shows a compositional bias: polar residues; the sequence is TPGTLLSIDTPTKSTGNTDN. Residues 155-165 are compositionally biased toward basic and acidic residues; sequence ADEHKRSRNSS. Residues 166–181 show a composition bias toward low complexity; it reads ETDGSTDGSDGNTTGA. The span at 182–199 shows a compositional bias: basic and acidic residues; that stretch reads DEPKLKRSREGTPTKDGK. Positions 202–216 are enriched in polar residues; it reads VQASSFHSVSPSSGD. The bZIP domain maps to 259–322; that stretch reads ELKRERRKQS…DKLRGANATL (64 aa). A basic motif region spans residues 261 to 280; it reads KRERRKQSNRESARRSRLRK. A leucine-zipper region spans residues 287–322; the sequence is LARKVEALTAENMALRSELNQLNEKSDKLRGANATL. The disordered stretch occupies residues 329-382; the sequence is SEPEKRVPANMLSRVKNSGAGDKNKNQGDNDSNSTSKLHQLLDTKPRAKAVAAG. The segment covering 357 to 366 has biased composition (polar residues); it reads DNDSNSTSKL.

Belongs to the bZIP family. As to quaternary structure, DNA-binding heterodimer. Interacts with GBF4. Interacts with BZIP16 and BZIP68. As to expression, present only in dark grown leaves and roots.

It is found in the nucleus. Its function is as follows. Binds to the G-box motif (5'-CCACGTGG-3') of the rbcS-1A gene promoter. G-box and G-box-like motifs are cis-acting elements defined in promoters of certain plant genes which are regulated by such diverse stimuli as light-induction or hormone control. This Arabidopsis thaliana (Mouse-ear cress) protein is G-box-binding factor 3 (GBF3).